A 486-amino-acid polypeptide reads, in one-letter code: Cardiolipin synthase A (486 aa).

2 helical membrane passes run 3-23 and 38-58; these read IFYN…IANI and MSWL…WFFF. PLD phosphodiesterase domains are found at residues 219–246 and 399–426; these read VDVR…VDPY and QKGL…DMRS. Catalysis depends on residues H224, K226, D231, H404, K406, and D411.

The protein belongs to the phospholipase D family. Cardiolipin synthase subfamily. ClsA sub-subfamily.

The protein resides in the cell inner membrane. It carries out the reaction 2 a 1,2-diacyl-sn-glycero-3-phospho-(1'-sn-glycerol) = a cardiolipin + glycerol. Functionally, catalyzes the reversible phosphatidyl group transfer from one phosphatidylglycerol molecule to another to form cardiolipin (CL) (diphosphatidylglycerol) and glycerol. The chain is Cardiolipin synthase A from Buchnera aphidicola subsp. Acyrthosiphon pisum (strain APS) (Acyrthosiphon pisum symbiotic bacterium).